A 292-amino-acid polypeptide reads, in one-letter code: G1/S-specific cyclin-D3 (292 aa).

One can recognise a Cyclin N-terminal domain in the interval 27–152 (VLQSLLRLEE…LVLGKLKWDL (126 aa)). The interval 255-292 (LREAAQTSPSPAPKAPRGSSSQGPSQTSTPTDVTAIHL) is disordered. Phosphoserine is present on residues Ser-264 and Ser-279. The segment covering 272–285 (GSSSQGPSQTSTPT) has biased composition (low complexity). Thr-283 bears the Phosphothreonine mark.

It belongs to the cyclin family. Cyclin D subfamily. In terms of assembly, interacts with the CDK4 and CDK6 protein kinases to form a serine/threonine kinase holoenzyme complex. The cyclin subunit imparts substrate specificity to the complex. Interacts with ATF5. Interacts with EIF3K. Component of the ternary complex cyclin D/CDK4/CDKN1B required for nuclear translocation and modulation of CDK4-mediated kinase activity. Can form similar complexes with either CDKN1A or CDKN2A. Post-translationally, phosphorylation at Thr-283 by MAP kinases is required for ubiquitination and degradation by the DCX(AMBRA1) complex. Ubiquitinated by the DCX(AMBRA1) complex during the transition from G1 to S cell phase, leading to its degradation: ubiquitination is dependent on Thr-283 phosphorylation. The DCX(AMBRA1) complex represents the major regulator of CCND3 stability during the G1/S transition. Polyubiquitinated by the SCF(FBXL2) complex, leading to proteasomal degradation.

The protein resides in the nucleus. Its subcellular location is the cytoplasm. Functionally, regulatory component of the cyclin D3-CDK4 (DC) complex that phosphorylates and inhibits members of the retinoblastoma (RB) protein family including RB1 and regulates the cell-cycle during G(1)/S transition. Phosphorylation of RB1 allows dissociation of the transcription factor E2F from the RB/E2F complex and the subsequent transcription of E2F target genes which are responsible for the progression through the G(1) phase. Hypophosphorylates RB1 in early G(1) phase. Cyclin D-CDK4 complexes are major integrators of various mitogenenic and antimitogenic signals. Component of the ternary complex, cyclin D3/CDK4/CDKN1B, required for nuclear translocation and activity of the cyclin D-CDK4 complex. Shows transcriptional coactivator activity with ATF5 independently of CDK4. This is G1/S-specific cyclin-D3 (CCND3) from Bos taurus (Bovine).